The following is a 463-amino-acid chain: Glycine--tRNA ligase (463 aa).

Residue R102 coordinates substrate. Residues 113-134 (KHGHPPPNGLADIRDPDTGEPG) are disordered. E165 serves as a coordination point for substrate. ATP contacts are provided by residues 197–199 (RNE), 207–212 (FRTREF), 284–285 (EL), and 328–331 (GLTR). 212–216 (FEQME) provides a ligand contact to substrate. 324–328 (EPAAG) contributes to the substrate binding site.

It belongs to the class-II aminoacyl-tRNA synthetase family. In terms of assembly, homodimer.

The protein localises to the cytoplasm. The catalysed reaction is tRNA(Gly) + glycine + ATP = glycyl-tRNA(Gly) + AMP + diphosphate. Catalyzes the attachment of glycine to tRNA(Gly). This chain is Glycine--tRNA ligase, found in Mycolicibacterium paratuberculosis (strain ATCC BAA-968 / K-10) (Mycobacterium paratuberculosis).